We begin with the raw amino-acid sequence, 765 residues long: Zinc metalloproteinase nas-37 (765 aa).

An N-terminal signal peptide occupies residues 1 to 22; the sequence is MKSQACLKVCLALIGLVSIVST. Positions 23–114 are excised as a propeptide; sequence AYIANDVVSD…SESNSPRSRR (92 aa). Positions 115 to 308 constitute a Peptidase M12A domain; sequence QAHPDPRNFW…AKMINTRYCS (194 aa). Asparagine 126 is a glycosylation site (N-linked (GlcNAc...) asparagine). Intrachain disulfides connect cysteine 156–cysteine 307, cysteine 177–cysteine 196, cysteine 311–cysteine 331, cysteine 333–cysteine 342, cysteine 350–cysteine 374, and cysteine 400–cysteine 420. Histidine 204 lines the Zn(2+) pocket. Glutamate 205 is a catalytic residue. The Zn(2+) site is built by histidine 208 and histidine 214. Residues 303 to 343 enclose the EGF-like domain; it reads NTRYCSNVCQRSLPCLNEGYTDPNNCGRCRCPSGYGGTYCE. The 109-residue stretch at 350–458 folds into the CUB domain; the sequence is CGGSLTASSS…RGFTLKYRAI (109 aa). The segment at 513–573 is disordered; that stretch reads KYSSEELYDP…TRPTPTTTVA (61 aa). 2 stretches are compositionally biased toward low complexity: residues 526 to 545 and 562 to 573; these read LSPSSSSASPALLLPSDASP and ALTRPTPTTTVA. The 52-residue stretch at 576 to 627 folds into the TSP type-1 domain; the sequence is TASWSAWGEWSACSQPCGGCGTKTRVRACYGGNQVCPGSNLDRESCNAHACA. Intrachain disulfides connect cysteine 588-cysteine 621, cysteine 592-cysteine 626, and cysteine 604-cysteine 611.

Zn(2+) serves as cofactor. In terms of tissue distribution, expressed in hypodermal cells. Not expressed in the seam cells in L1 to L3 larvae, but it is present in seam cells of L4 larvae. Also expressed in attachment points of the cuticle at the anterior end of larvae, in the arcade cells in the mouth, the anterior pharynx, the amphid socket cells, and in the rectal epithelial cells at the posterior end of the larvae (at protein level).

It is found in the secreted. In terms of biological role, metalloprotease. Plays an essential role in molting, a process during larval stages in which a new cuticle is formed and the old cuticle is shed. Required during ecdysis, the opening of the cuticle to allow the worm to escape. The protein is Zinc metalloproteinase nas-37 (nas-37) of Caenorhabditis elegans.